Consider the following 325-residue polypeptide: Outer spore wall protein LDS1 (325 aa).

The Cytoplasmic portion of the chain corresponds to 1–91 (MSFTGSLALA…NTNKSSYSTT (91 aa)). A helical transmembrane segment spans residues 92 to 112 (MLGILSSYLIMFALVSFVYWA). At 113-118 (TITPMY) the chain is on the extracellular side. Residues 119-139 (TAFLIVLGPIGLFIAIFHSFL) form a helical membrane-spanning segment. The Cytoplasmic segment spans residues 140-208 (QANVFTLLFM…VKYMLGLSVL (69 aa)). Residues 209–229 (FVLLVISFFPLIGPILFHILI) traverse the membrane as a helical segment. At 230–263 (SPFITQIYFTKVLRLQNFDNIQRRENIYLHAGQY) the chain is on the extracellular side. Residues 264–284 (ASFGFLAGLIESVPILAGFAI) traverse the membrane as a helical segment. The Cytoplasmic portion of the chain corresponds to 285–325 (STNTIGSVLFNLDHPMVPENLVETQAEIEAAPQDINQQPNQ).

It belongs to the LDS family.

It is found in the prospore membrane. It localises to the lipid droplet. The protein localises to the spore wall. In terms of biological role, involved in spore wall assembly. This Saccharomyces cerevisiae (strain ATCC 204508 / S288c) (Baker's yeast) protein is Outer spore wall protein LDS1.